The primary structure comprises 412 residues: Serine hydroxymethyltransferase (412 aa).

(6S)-5,6,7,8-tetrahydrofolate is bound by residues Leu120 and Gly124–Leu126. Lys229 is subject to N6-(pyridoxal phosphate)lysine. (6S)-5,6,7,8-tetrahydrofolate is bound at residue Ser352–Phe354.

Belongs to the SHMT family. As to quaternary structure, homodimer. Pyridoxal 5'-phosphate is required as a cofactor.

It is found in the cytoplasm. It carries out the reaction (6R)-5,10-methylene-5,6,7,8-tetrahydrofolate + glycine + H2O = (6S)-5,6,7,8-tetrahydrofolate + L-serine. It participates in one-carbon metabolism; tetrahydrofolate interconversion. It functions in the pathway amino-acid biosynthesis; glycine biosynthesis; glycine from L-serine: step 1/1. Catalyzes the reversible interconversion of serine and glycine with tetrahydrofolate (THF) serving as the one-carbon carrier. This reaction serves as the major source of one-carbon groups required for the biosynthesis of purines, thymidylate, methionine, and other important biomolecules. Also exhibits THF-independent aldolase activity toward beta-hydroxyamino acids, producing glycine and aldehydes, via a retro-aldol mechanism. This Ruminiclostridium cellulolyticum (strain ATCC 35319 / DSM 5812 / JCM 6584 / H10) (Clostridium cellulolyticum) protein is Serine hydroxymethyltransferase.